A 594-amino-acid polypeptide reads, in one-letter code: MISPIGGLSQALHSPSDSIFVASLPRDIQVAEIAPQTKVLRSRLWDRLKFEVEYGRRRGTTSNSYLIQADHTALIDPPGESFCDLYLAELPKYLDLAQLDYIVASHVNPNRMVTLEQLLRRATKAKLICSRPAAKVLKATFPHWEERFQTVRSQDMLDLGRGHKLQLMTLPTPRWPDGLCAYDAGSQILFSDKLFGTHVCGDAIFDEDWRQLGGDRRFYFDCLHAPQTRQVETALDQFDPLTLKMIAPGHGPLVRFSLSRLYSDYRQWCQQQPSQTLKVALIYASAYGNTATMARAIAQGLVKAGVAVETINCEIAEPNEIVEAIQACDGFIVGSPTLGSHAPVQIQTALGIVLSSATKTKLAGVFGSYGWSGEAIDLIENKLKDGGYRFGFEAIRIQFSPNLDALDVCTTSGANFARQLRTHKRQRIARQATTETQADRTQQAVGRIIGSIGVVTTQTTGRHQGILTSWVSQASFTPPGIMLAIPGEFDAYGLAGQNKAFVLNLLQEGRSVRRHFDHQPLPKDGDNPFSRLEHYSTQNGCLILAEALAYLECLVQSWSNIGDHVLVYATVQAGQVLQPNGITAIRHRKSGGQY.

Residues 57–250 (RRGTTSNSYL…LTLKMIAPGH (194 aa)) are zinc metallo-hydrolase. The Flavodoxin-like domain occupies 279–417 (VALIYASAYG…VCTTSGANFA (139 aa)). Positions 445-594 (VGRIIGSIGV…IRHRKSGGQY (150 aa)) are flavodoxin-reductase-like.

It in the N-terminal section; belongs to the zinc metallo-hydrolase group 3 family. This sequence in the C-terminal section; belongs to the flavodoxin reductase family. The cofactor is Fe cation.

Mediates electron transfer from NADH to oxygen, reducing it to water. This modular protein has 3 redox cofactors, in other organisms the same activity requires 2 or 3 proteins. The protein is Putative diflavin flavoprotein A 4 (dfa4) of Synechocystis sp. (strain ATCC 27184 / PCC 6803 / Kazusa).